The chain runs to 380 residues: Cytochrome b (380 aa).

4 helical membrane passes run 34–54, 78–99, 114–134, and 179–199; these read FGSL…LLAM, WLIR…YLHI, WNTG…GYVL, and FFAL…IHLT. Heme b-binding residues include histidine 84 and histidine 98. Heme b-binding residues include histidine 183 and histidine 197. Histidine 202 contributes to the a ubiquinone binding site. A run of 4 helical transmembrane segments spans residues 227-247, 289-309, 321-341, and 348-368; these read LKDT…ALFS, LGGV…PLLH, LSQL…WVGS, and FIII…ILLP.

The protein belongs to the cytochrome b family. The cytochrome bc1 complex contains 11 subunits: 3 respiratory subunits (MT-CYB, CYC1 and UQCRFS1), 2 core proteins (UQCRC1 and UQCRC2) and 6 low-molecular weight proteins (UQCRH/QCR6, UQCRB/QCR7, UQCRQ/QCR8, UQCR10/QCR9, UQCR11/QCR10 and a cleavage product of UQCRFS1). This cytochrome bc1 complex then forms a dimer. Heme b serves as cofactor.

The protein resides in the mitochondrion inner membrane. Component of the ubiquinol-cytochrome c reductase complex (complex III or cytochrome b-c1 complex) that is part of the mitochondrial respiratory chain. The b-c1 complex mediates electron transfer from ubiquinol to cytochrome c. Contributes to the generation of a proton gradient across the mitochondrial membrane that is then used for ATP synthesis. The polypeptide is Cytochrome b (MT-CYB) (Fregetta tropica (Black-bellied storm-petrel)).